Here is a 258-residue protein sequence, read N- to C-terminus: Thiamine thiazole synthase (258 aa).

Residues serine 36, 55–56, glycine 63, isoleucine 127, and 153–155 each bind NAD(+); these read ER and HVD. Residues aspartate 155 and histidine 170 each coordinate Fe cation. Methionine 224 contacts NAD(+). Arginine 234 contacts glycine.

The protein belongs to the THI4 family. As to quaternary structure, homooctamer; tetramer of dimers. The cofactor is Fe(2+).

It carries out the reaction hydrogen sulfide + glycine + NAD(+) = ADP-5-ethyl-4-methylthiazole-2-carboxylate + nicotinamide + 3 H2O + H(+). It functions in the pathway cofactor biosynthesis; thiamine diphosphate biosynthesis. Its function is as follows. Involved in the biosynthesis of the thiazole moiety of thiamine. Catalyzes the conversion of NAD and glycine to adenosine diphosphate 5-(2-hydroxyethyl)-4-methylthiazole-2-carboxylate (ADT), an adenylated thiazole intermediate, using free sulfide as a source of sulfur. The polypeptide is Thiamine thiazole synthase (Methanothermobacter thermautotrophicus (strain ATCC 29096 / DSM 1053 / JCM 10044 / NBRC 100330 / Delta H) (Methanobacterium thermoautotrophicum)).